We begin with the raw amino-acid sequence, 284 residues long: Acetylglutamate kinase (284 aa).

Substrate is bound by residues 66 to 67, arginine 88, and asparagine 179; that span reads GG.

It belongs to the acetylglutamate kinase family. ArgB subfamily.

It is found in the cytoplasm. It catalyses the reaction N-acetyl-L-glutamate + ATP = N-acetyl-L-glutamyl 5-phosphate + ADP. Its pathway is amino-acid biosynthesis; L-arginine biosynthesis; N(2)-acetyl-L-ornithine from L-glutamate: step 2/4. Functionally, catalyzes the ATP-dependent phosphorylation of N-acetyl-L-glutamate. This chain is Acetylglutamate kinase, found in Actinobacillus pleuropneumoniae serotype 3 (strain JL03).